The chain runs to 425 residues: Nuclear pore complex-interacting protein family member B6 (425 aa).

The disordered stretch occupies residues 332-414 (SPLPPSVDDN…RRLSKLRTRH (83 aa)). Over residues 353–395 (EVEKPPKPKRWRVDEVEQSPKPKRRRVDEVEQSPKPKRQREAE) the composition is skewed to basic and acidic residues. A compositionally biased stretch (basic residues) spans 401–414 (KPKRRRLSKLRTRH).

The protein belongs to the NPIP family.

The polypeptide is Nuclear pore complex-interacting protein family member B6 (NPIPB6) (Homo sapiens (Human)).